The chain runs to 125 residues: Small ribosomal subunit protein eS6 (125 aa).

This sequence belongs to the eukaryotic ribosomal protein eS6 family. As to quaternary structure, part of the 30S ribosomal subunit.

This chain is Small ribosomal subunit protein eS6, found in Thermococcus kodakarensis (strain ATCC BAA-918 / JCM 12380 / KOD1) (Pyrococcus kodakaraensis (strain KOD1)).